A 647-amino-acid chain; its full sequence is UvrABC system protein C (647 aa).

The GIY-YIG domain occupies 16-95 (VEPGVYRFRD…IKEFDPRFNI (80 aa)). The UVR domain occupies 208 to 243 (DRYARDLERKMSAAAEQLDFERAARLRDDLFALKRA).

Belongs to the UvrC family. Interacts with UvrB in an incision complex.

It is found in the cytoplasm. The UvrABC repair system catalyzes the recognition and processing of DNA lesions. UvrC both incises the 5' and 3' sides of the lesion. The N-terminal half is responsible for the 3' incision and the C-terminal half is responsible for the 5' incision. The sequence is that of UvrABC system protein C from Mycobacterium leprae (strain Br4923).